The primary structure comprises 100 residues: Omega-hexatoxin-Asp2a (100 aa).

The signal sequence occupies residues 1-23; it reads MKFSKLSITLAVILTQAVFVLCG. A propeptide spanning residues 24-55 is cleaved from the precursor; it reads MKNEDFMEKGLESNELHDAIKKPVNSGKPDTE. Intrachain disulfides connect C60/C73, C66/C79, and C72/C84.

Belongs to the neurotoxin 15 family. 02 (omega-actx) subfamily. Expressed by the venom gland.

The protein resides in the secreted. In terms of biological role, potent inhibitor of insect, but not mammalian, voltage-gated calcium channels (Cav). This is Omega-hexatoxin-Asp2a from Atrax sp. (strain Illawarra) (Funnel-web spider).